Here is a 1233-residue protein sequence, read N- to C-terminus: ATP-dependent helicase/nuclease subunit A (1233 aa).

Residues 3-474 (TKWTEEQKQA…ILLYKNFRSR (472 aa)) form the UvrD-like helicase ATP-binding domain. 24–31 (AAAGSGKT) contacts ATP. The 292-residue stretch at 518-809 (VTGGAVELHL…RIMSIHKSKG (292 aa)) folds into the UvrD-like helicase C-terminal domain. The disordered stretch occupies residues 533–555 (VEEEVEEKEEEKNEEKDFEEEEE).

Belongs to the helicase family. AddA subfamily. In terms of assembly, heterodimer of AddA and AddB/RexB. Mg(2+) is required as a cofactor.

The catalysed reaction is Couples ATP hydrolysis with the unwinding of duplex DNA by translocating in the 3'-5' direction.. It carries out the reaction ATP + H2O = ADP + phosphate + H(+). The heterodimer acts as both an ATP-dependent DNA helicase and an ATP-dependent, dual-direction single-stranded exonuclease. Recognizes the chi site generating a DNA molecule suitable for the initiation of homologous recombination. The AddA nuclease domain is required for chi fragment generation; this subunit has the helicase and 3' -&gt; 5' nuclease activities. The polypeptide is ATP-dependent helicase/nuclease subunit A (Thermoanaerobacter sp. (strain X514)).